Consider the following 229-residue polypeptide: Peptidyl-prolyl cis-trans isomerase FKBP17-1, chloroplastic (229 aa).

A chloroplast-targeting transit peptide spans 1-63; sequence MIRCFAWTPL…SISLSIIAVT (63 aa). One can recognise a PPIase FKBP-type domain in the interval 105–225; the sequence is GDQIEIHYYG…VFDIELVSTR (121 aa).

This sequence belongs to the FKBP-type PPIase family.

Its subcellular location is the plastid. The protein resides in the chloroplast thylakoid lumen. The catalysed reaction is [protein]-peptidylproline (omega=180) = [protein]-peptidylproline (omega=0). Its function is as follows. PPIases accelerate the folding of proteins. It catalyzes the cis-trans isomerization of proline imidic peptide bonds in oligopeptides. This is Peptidyl-prolyl cis-trans isomerase FKBP17-1, chloroplastic (FKBP17-1) from Arabidopsis thaliana (Mouse-ear cress).